The following is a 342-amino-acid chain: 3-isopropylmalate dehydrogenase (342 aa).

Residues Arg87, Arg97, Arg121, and Asp212 each coordinate substrate. Residues Asp212, Asp236, and Asp240 each coordinate Mg(2+). 272-284 (GSAPDIAGRQLAD) is a binding site for NAD(+). The span at 319-328 (RAAAGAAQPS) shows a compositional bias: low complexity. Positions 319–342 (RAAAGAAQPSTRERGEDLAARAAG) are disordered. Basic and acidic residues predominate over residues 329 to 342 (TRERGEDLAARAAG).

The protein belongs to the isocitrate and isopropylmalate dehydrogenases family. LeuB type 2 subfamily. In terms of assembly, homodimer. Mg(2+) serves as cofactor. Mn(2+) is required as a cofactor.

The protein resides in the cytoplasm. The enzyme catalyses (2R,3S)-3-isopropylmalate + NAD(+) = 4-methyl-2-oxopentanoate + CO2 + NADH. Its pathway is amino-acid biosynthesis; L-leucine biosynthesis; L-leucine from 3-methyl-2-oxobutanoate: step 3/4. Functionally, catalyzes the oxidation of 3-carboxy-2-hydroxy-4-methylpentanoate (3-isopropylmalate) to 3-carboxy-4-methyl-2-oxopentanoate. The product decarboxylates to 4-methyl-2 oxopentanoate. The protein is 3-isopropylmalate dehydrogenase of Frankia casuarinae (strain DSM 45818 / CECT 9043 / HFP020203 / CcI3).